The sequence spans 83 residues: Translation initiation factor IF-1 (83 aa).

One can recognise an S1-like domain in the interval 1–72; that stretch reads MAKEESIEMQ…TRGRIVYREA (72 aa).

It belongs to the IF-1 family. As to quaternary structure, component of the 30S ribosomal translation pre-initiation complex which assembles on the 30S ribosome in the order IF-2 and IF-3, IF-1 and N-formylmethionyl-tRNA(fMet); mRNA recruitment can occur at any time during PIC assembly.

Its subcellular location is the cytoplasm. In terms of biological role, one of the essential components for the initiation of protein synthesis. Stabilizes the binding of IF-2 and IF-3 on the 30S subunit to which N-formylmethionyl-tRNA(fMet) subsequently binds. Helps modulate mRNA selection, yielding the 30S pre-initiation complex (PIC). Upon addition of the 50S ribosomal subunit IF-1, IF-2 and IF-3 are released leaving the mature 70S translation initiation complex. The protein is Translation initiation factor IF-1 of Coxiella burnetii (strain Dugway 5J108-111).